Here is an 87-residue protein sequence, read N- to C-terminus: Small ribosomal subunit protein bS20 (87 aa).

Basic residues predominate over residues 1 to 11 (MANIKSAKKRA). The tract at residues 1 to 26 (MANIKSAKKRAVQSEKRRQHNASQRS) is disordered.

This sequence belongs to the bacterial ribosomal protein bS20 family.

Its function is as follows. Binds directly to 16S ribosomal RNA. This Actinobacillus pleuropneumoniae serotype 5b (strain L20) protein is Small ribosomal subunit protein bS20.